Reading from the N-terminus, the 44-residue chain is Small, acid-soluble spore protein P (44 aa).

Residues methionine 1–methionine 44 form a disordered region. Over residues asparagine 8–glutamine 18 the composition is skewed to basic and acidic residues. Residues histidine 26–methionine 44 are compositionally biased toward basic residues.

Belongs to the SspP family.

It is found in the spore core. The sequence is that of Small, acid-soluble spore protein P from Bacillus cereus (strain ATCC 14579 / DSM 31 / CCUG 7414 / JCM 2152 / NBRC 15305 / NCIMB 9373 / NCTC 2599 / NRRL B-3711).